The chain runs to 212 residues: Thymidine kinase (212 aa).

ATP-binding positions include 16-23 (GPMFSGKS) and 99-102 (DEAQ). Residue Glu-100 is the Proton acceptor of the active site.

The protein belongs to the thymidine kinase family. Homotetramer.

Its subcellular location is the cytoplasm. It catalyses the reaction thymidine + ATP = dTMP + ADP + H(+). This chain is Thymidine kinase, found in Deinococcus radiodurans (strain ATCC 13939 / DSM 20539 / JCM 16871 / CCUG 27074 / LMG 4051 / NBRC 15346 / NCIMB 9279 / VKM B-1422 / R1).